Reading from the N-terminus, the 913-residue chain is Anoctamin-5 (913 aa).

At 1–299 the chain is on the cytoplasmic side; sequence MGDPDLLEVL…DLIKNYYGEK (299 aa). The helical transmembrane segment at 300–320 threads the bilayer; it reads IGIYFVFLGFYTEMLFFAAVV. At 321-380 the chain is on the extracellular side; sequence GLACFIYGLLSMEHNTSSTEICDPEIGGQMIMCPLCDQVCDYWRLNSTCLASKFSHLFDN. Residues asparagine 335, asparagine 366, and asparagine 380 are each glycosylated (N-linked (GlcNAc...) asparagine). Residues 381–401 form a helical membrane-spanning segment; that stretch reads ESTVFFAIFMGIWVTLFLEFW. Over 402-462 the chain is Cytoplasmic; that stretch reads KQRQARLEYE…YTRIPWYFLS (61 aa). The chain crosses the membrane as a helical span at residues 463–483; it reads GATVTLWMSLVVTSMVAVIVY. The Extracellular portion of the chain corresponds to 484 to 511; the sequence is RLSVFATFASFMESDASLKQVKSFLTPQ. Residues 512-532 traverse the membrane as a helical segment; sequence ITTSLTGSCLNFIVILILNFF. The Cytoplasmic portion of the chain corresponds to 533–557; it reads YEKISAWITKMEIPRTYQEYESSLT. Residues 558 to 578 form a helical membrane-spanning segment; it reads LKMFLFQFVNFYSSCFYVAFF. The Extracellular portion of the chain corresponds to 579-679; that stretch reads KGKFVGYPGK…FYEYLETVTQ (101 aa). The chain crosses the membrane as a helical span at residues 680-700; sequence FGFVTLFVASFPLAPLLALIN. At 701–732 the chain is on the cytoplasmic side; sequence NIVEIRVDAWKLTTQYRRTVASKAHSIGVWQD. A helical transmembrane segment spans residues 733 to 753; it reads ILYGMAVLSVATNAFIVAFTS. Topologically, residues 754 to 834 are extracellular; the sequence is DIIPRLVYYY…FWHVLAAKMT (81 aa). Residues asparagine 768, asparagine 778, and asparagine 791 are each glycosylated (N-linked (GlcNAc...) asparagine). The chain crosses the membrane as a helical span at residues 835 to 855; the sequence is FIIVMEHVVFLVKFLLAWMIP. The Cytoplasmic segment spans residues 856–913; it reads DVPKDVVERIKREKLMTIKILHDFELNKLKENLGINSNEFAKHVMIEENKAQLAKSTL.

The protein belongs to the anoctamin family. In terms of tissue distribution, highly expressed in brain, heart, kidney, lung, and skeletal muscle. Weakly expressed in bone marrow, fetal liver, placenta, spleen, thymus, osteoblasts and periodontal ligament cells.

Its subcellular location is the endoplasmic reticulum membrane. It is found in the cell membrane. Functionally, plays a role in plasma membrane repair in a process involving annexins. Does not exhibit calcium-activated chloride channel (CaCC) activity. In Homo sapiens (Human), this protein is Anoctamin-5 (ANO5).